The chain runs to 369 residues: Probable N-acetyltransferase 16 (369 aa).

The segment at 1–49 is disordered; that stretch reads MKLEASCGTATSEVPKPEKKTARDAEPSSETRPQEVEAEPRSGSGPEAE. Residues 15–26 are compositionally biased toward basic and acidic residues; the sequence is PKPEKKTARDAE. The N-acetyltransferase domain maps to 53–188; the sequence is LDFVVATERE…QGILLVRFNA (136 aa).

Functionally, probable N-acetyltransferase. Shows only trace activity toward L-His and no N-acetyltransferase activity toward other amino acids. The physiological substrate of this enzyme is unknown. This chain is Probable N-acetyltransferase 16 (NAT16), found in Homo sapiens (Human).